The chain runs to 448 residues: Homogentisate 1,2-dioxygenase (448 aa).

The active-site Proton acceptor is the histidine 303. Fe cation is bound by residues histidine 346 and glutamate 352. Homogentisate is bound by residues tyrosine 361 and histidine 382. Histidine 382 provides a ligand contact to Fe cation.

The protein belongs to the homogentisate dioxygenase family. Hexamer; dimer of trimers. Requires Fe cation as cofactor.

The enzyme catalyses homogentisate + O2 = 4-maleylacetoacetate + H(+). The protein operates within amino-acid degradation; L-phenylalanine degradation; acetoacetate and fumarate from L-phenylalanine: step 4/6. Involved in the catabolism of homogentisate (2,5-dihydroxyphenylacetate or 2,5-OH-PhAc), a central intermediate in the degradation of phenylalanine and tyrosine. Catalyzes the oxidative ring cleavage of the aromatic ring of homogentisate to yield maleylacetoacetate. The polypeptide is Homogentisate 1,2-dioxygenase (Nitrobacter hamburgensis (strain DSM 10229 / NCIMB 13809 / X14)).